A 293-amino-acid polypeptide reads, in one-letter code: GTPase Era (293 aa).

The 168-residue stretch at 3–170 (KSGFITIIGR…VELMVKYMPE (168 aa)) folds into the Era-type G domain. The segment at 11 to 18 (GRPNVGKS) is G1. Position 11 to 18 (11 to 18 (GRPNVGKS)) interacts with GTP. Residues 37-41 (QTTRN) are G2. Positions 58-61 (DTPG) are G3. Residues 58–62 (DTPGI) and 120–123 (NKID) contribute to the GTP site. Residues 120 to 123 (NKID) form a G4 region. Residues 149–151 (ISA) are G5. A KH type-2 domain is found at 201 to 278 (LSKEVPHGIA…YLEVWVKVKK (78 aa)).

Belongs to the TRAFAC class TrmE-Era-EngA-EngB-Septin-like GTPase superfamily. Era GTPase family. In terms of assembly, monomer.

The protein localises to the cytoplasm. It is found in the cell membrane. Its function is as follows. An essential GTPase that binds both GDP and GTP, with rapid nucleotide exchange. Plays a role in 16S rRNA processing and 30S ribosomal subunit biogenesis and possibly also in cell cycle regulation and energy metabolism. The protein is GTPase Era of Clostridium kluyveri (strain NBRC 12016).